The following is a 298-amino-acid chain: N-acetylmuramic acid 6-phosphate etherase (298 aa).

In terms of domain architecture, SIS spans 54–217 (TIKAMKQGGR…STTVMIGLGK (164 aa)). The Proton donor role is filled by Glu82. Residue Glu113 is part of the active site.

It belongs to the GCKR-like family. MurNAc-6-P etherase subfamily. As to quaternary structure, homodimer.

The catalysed reaction is N-acetyl-D-muramate 6-phosphate + H2O = N-acetyl-D-glucosamine 6-phosphate + (R)-lactate. It functions in the pathway amino-sugar metabolism; N-acetylmuramate degradation. Functionally, specifically catalyzes the cleavage of the D-lactyl ether substituent of MurNAc 6-phosphate, producing GlcNAc 6-phosphate and D-lactate. The sequence is that of N-acetylmuramic acid 6-phosphate etherase from Halalkalibacterium halodurans (strain ATCC BAA-125 / DSM 18197 / FERM 7344 / JCM 9153 / C-125) (Bacillus halodurans).